The sequence spans 289 residues: ATP synthase gamma chain (289 aa).

It belongs to the ATPase gamma chain family. F-type ATPases have 2 components, CF(1) - the catalytic core - and CF(0) - the membrane proton channel. CF(1) has five subunits: alpha(3), beta(3), gamma(1), delta(1), epsilon(1). CF(0) has three main subunits: a, b and c.

The protein resides in the cell inner membrane. Functionally, produces ATP from ADP in the presence of a proton gradient across the membrane. The gamma chain is believed to be important in regulating ATPase activity and the flow of protons through the CF(0) complex. The protein is ATP synthase gamma chain of Haemophilus influenzae (strain PittGG).